The primary structure comprises 506 residues: Apolipoprotein N-acyltransferase (506 aa).

7 helical membrane passes run 10–30 (ANAK…AGWG), 33–53 (LALP…PLWW), 57–77 (VLAP…FYGS), 105–125 (IWLC…LLMA), 139–159 (WGVT…LWWI), 176–196 (LAGP…VTLS), and 205–225 (VGLA…SVRV). The region spanning 238–473 (IQGNIPTREK…FVIYAATIFR (236 aa)) is the CN hydrolase domain. Glutamate 279 (proton acceptor) is an active-site residue. Lysine 336 is an active-site residue. Catalysis depends on cysteine 385, which acts as the Nucleophile. The helical transmembrane segment at 483 to 500 (YGDWLLPLLLGMLSLSVL) threads the bilayer.

Belongs to the CN hydrolase family. Apolipoprotein N-acyltransferase subfamily.

The protein resides in the cell inner membrane. It carries out the reaction N-terminal S-1,2-diacyl-sn-glyceryl-L-cysteinyl-[lipoprotein] + a glycerophospholipid = N-acyl-S-1,2-diacyl-sn-glyceryl-L-cysteinyl-[lipoprotein] + a 2-acyl-sn-glycero-3-phospholipid + H(+). Its pathway is protein modification; lipoprotein biosynthesis (N-acyl transfer). In terms of biological role, catalyzes the phospholipid dependent N-acylation of the N-terminal cysteine of apolipoprotein, the last step in lipoprotein maturation. This chain is Apolipoprotein N-acyltransferase, found in Thermosynechococcus vestitus (strain NIES-2133 / IAM M-273 / BP-1).